Reading from the N-terminus, the 490-residue chain is Keratin, type II cytoskeletal 8 (490 aa).

Polar residues predominate over residues 1–27 (MSIRVTQKSYKMSTSGPRAFSSRSFTS). Positions 1–48 (MSIRVTQKSYKMSTSGPRAFSSRSFTSGPGARISSSSFSRVGSSSSSF) are disordered. The head stretch occupies residues 1–96 (MSIRVTQKSY…DPNIQAVRTQ (96 aa)). The residue at position 9 (serine 9) is a Phosphoserine; by PKC/PRKCE. Lysine 11 is covalently cross-linked (Glycyl lysine isopeptide (Lys-Gly) (interchain with G-Cter in SUMO2)). 4 positions are modified to phosphoserine: serine 13, serine 15, serine 21, and serine 22. An Omega-N-methylarginine modification is found at arginine 23. Residue serine 24 is modified to Phosphoserine; by PKC/PRKCE. Threonine 26 carries the post-translational modification Phosphothreonine. At serine 27 the chain carries Phosphoserine. Residue arginine 32 is modified to Omega-N-methylarginine. Phosphoserine is present on residues serine 34, serine 37, and serine 39. Low complexity predominate over residues 34-48 (SSSSFSRVGSSSSSF). An Omega-N-methylarginine modification is found at arginine 40. Residues serine 43, serine 44, and serine 47 each carry the phosphoserine modification. Arginine 49 is modified (asymmetric dimethylarginine; alternate). Residue arginine 49 is modified to Omega-N-methylarginine; alternate. Serine 51 carries the phosphoserine modification. Serine 80 is modified (phosphoserine; by MAPK). The tract at residues 97 to 132 (EKEQIKSLNNKFASFIDKVRFLEQQNKMLETKWSLL) is coil 1A. Residues 97–408 (EKEQIKSLNN…KLLEGEESRL (312 aa)) enclose the IF rod domain. Lysine 107 is subject to N6-malonyllysine. Glycyl lysine isopeptide (Lys-Gly) (interchain with G-Cter in SUMO2) cross-links involve residues lysine 128 and lysine 136. Positions 133–149 (QQQKTSRSNMDNMFESY) are linker 1. The coil 1B stretch occupies residues 150–241 (INNLRRQLEA…QIHEEEIREL (92 aa)). A Glycyl lysine isopeptide (Lys-Gly) (interchain with G-Cter in SUMO1); alternate cross-link involves residue lysine 203. Lysine 203 is covalently cross-linked (Glycyl lysine isopeptide (Lys-Gly) (interchain with G-Cter in SUMO2); alternate). At lysine 213 the chain carries N6-acetyllysine. The segment at 242-265 (QSQISDTSVVLSMDNSRSLDMDGI) is linker 12. Phosphoserine occurs at positions 259 and 280. The coil 2 stretch occupies residues 266-403 (IAEVRAQYED…ITTYRKLLEG (138 aa)). The tract at residues 267 to 387 (AEVRAQYEDI…REYQELMNVK (121 aa)) is necessary for interaction with PNN. Lysine 291 participates in a covalent cross-link: Glycyl lysine isopeptide (Lys-Gly) (interchain with G-Cter in SUMO2). Lysine 301 is covalently cross-linked (Glycyl lysine isopeptide (Lys-Gly) (interchain with G-Cter in SUMO2); alternate). N6-acetyllysine; alternate is present on lysine 301. Lysine 310 participates in a covalent cross-link: Glycyl lysine isopeptide (Lys-Gly) (interchain with G-Cter in SUMO2). Residue lysine 331 forms a Glycyl lysine isopeptide (Lys-Gly) (interchain with G-Cter in SUMO2); alternate linkage. Lysine 331 is subject to N6-acetyllysine; alternate. Serine 336 bears the Phosphoserine mark. A Glycyl lysine isopeptide (Lys-Gly) (interchain with G-Cter in SUMO2) cross-link involves residue lysine 399. The segment at 404-490 (EESRLESGMQ…VSESSDVVSK (87 aa)) is tail. Phosphoserine is present on residues serine 406, serine 410, serine 416, serine 423, serine 430, serine 432, and serine 438. Lysine 479 is covalently cross-linked (Glycyl lysine isopeptide (Lys-Gly) (interchain with G-Cter in SUMO1); alternate). A Glycyl lysine isopeptide (Lys-Gly) (interchain with G-Cter in SUMO2); alternate cross-link involves residue lysine 479. Phosphoserine is present on residues serine 482, serine 484, serine 485, and serine 489.

It belongs to the intermediate filament family. Heterotetramer of two type I and two type II keratins. Forms a heterodimer with KRT18. Associates with KRT20. Interacts with PLEC isoform 1C, when in a heterodimer with KRT18. Interacts with PNN. When associated with KRT19, interacts with DMD. Interacts with TCHP. Interacts with APEX1. Interacts with GPER1. Interacts with EPPK1. Interacts with PKP1 and PKP2. Post-translationally, phosphorylation on serine residues is enhanced during EGF stimulation and mitosis. Ser-80 phosphorylation plays an important role in keratin filament reorganization. O-glycosylated. O-GlcNAcylation at multiple sites increases solubility, and decreases stability by inducing proteasomal degradation. In terms of processing, O-glycosylated (O-GlcNAcylated), in a cell cycle-dependent manner. In terms of tissue distribution, expressed in abundance in the epithelia of colon, bladder, ileum, and stomach, with lower expression observed in earskin (at protein level). Also expressed in pancreas, liver, dudenum and jejunum.

Its subcellular location is the cytoplasm. It is found in the nucleus. The protein localises to the nucleoplasm. It localises to the nucleus matrix. Together with KRT19, helps to link the contractile apparatus to dystrophin at the costameres of striated muscle. This is Keratin, type II cytoskeletal 8 (Krt8) from Mus musculus (Mouse).